Reading from the N-terminus, the 434-residue chain is Ribosomal protein uS12 methylthiotransferase RimO (434 aa).

The region spanning 2–112 is the MTTase N-terminal domain; it reads AKIGFVSLGC…VLEAVQVVLP (111 aa). [4Fe-4S] cluster contacts are provided by Cys-11, Cys-47, Cys-76, Cys-142, Cys-146, and Cys-149. Positions 128 to 365 constitute a Radical SAM core domain; that stretch reads LTPRHYAYVK…LELQARVSLR (238 aa). The 67-residue stretch at 368-434 folds into the TRAM domain; sequence QRFVGKTLEV…DTYDLHGVQA (67 aa).

Belongs to the methylthiotransferase family. RimO subfamily. It depends on [4Fe-4S] cluster as a cofactor.

The protein localises to the cytoplasm. It catalyses the reaction L-aspartate(89)-[ribosomal protein uS12]-hydrogen + (sulfur carrier)-SH + AH2 + 2 S-adenosyl-L-methionine = 3-methylsulfanyl-L-aspartate(89)-[ribosomal protein uS12]-hydrogen + (sulfur carrier)-H + 5'-deoxyadenosine + L-methionine + A + S-adenosyl-L-homocysteine + 2 H(+). Catalyzes the methylthiolation of an aspartic acid residue of ribosomal protein uS12. The polypeptide is Ribosomal protein uS12 methylthiotransferase RimO (Thermus thermophilus (strain ATCC 27634 / DSM 579 / HB8)).